The sequence spans 208 residues: Ubiquitin-conjugating enzyme E2 S (208 aa).

The UBC core domain occupies 14–160 (QTIRQVMKEL…ARMMTEIHAQ (147 aa)). Cys98 serves as the catalytic Glycyl thioester intermediate. The tract at residues 161–193 (PAKCGAGASDAKDDDGPSTKKHAGLDKKLQDKK) is disordered. Residues 170–193 (DAKDDDGPSTKKHAGLDKKLQDKK) are compositionally biased toward basic and acidic residues.

This sequence belongs to the ubiquitin-conjugating enzyme family.

It catalyses the reaction S-ubiquitinyl-[E1 ubiquitin-activating enzyme]-L-cysteine + [E2 ubiquitin-conjugating enzyme]-L-cysteine = [E1 ubiquitin-activating enzyme]-L-cysteine + S-ubiquitinyl-[E2 ubiquitin-conjugating enzyme]-L-cysteine.. It functions in the pathway protein modification; protein ubiquitination. Its function is as follows. Catalyzes the covalent attachment of ubiquitin to other proteins. Acts as an essential factor of the anaphase promoting complex/cyclosome (APC/C), a cell cycle-regulated ubiquitin ligase that controls progression through mitosis. Acts by specifically elongating polyubiquitin chains initiated by the E2 enzyme vih/UbcH10 on APC/C substrates, enhancing the degradation of APC/C substrates by the proteasome and promoting mitotic exit. The sequence is that of Ubiquitin-conjugating enzyme E2 S from Drosophila virilis (Fruit fly).